Here is a 155-residue protein sequence, read N- to C-terminus: Zinc finger HIT domain-containing protein 3 (155 aa).

Residues C11, C14, C22, C25, C30, C34, H38, and C42 each contribute to the Zn(2+) site. The HIT-type zinc finger occupies 11–42 (CVICLEKPKYRCPACRVPYCSVVCFRKHKEQC). S80 bears the Phosphoserine mark.

Thyroid receptor interacting proteins (TRIPs) specifically interact with the ligand binding domain of the thyroid receptor (TR). Requires the presence of thyroid hormone for its interaction. Interacts with NUFIP1. Interacts (via HIT-type zinc finger) with the RUVBL1/RUVBL2 complex in the presence of ADP.

The protein resides in the cytoplasm. It localises to the nucleus. The protein is Zinc finger HIT domain-containing protein 3 (ZNHIT3) of Homo sapiens (Human).